Reading from the N-terminus, the 457-residue chain is ATP synthase subunit beta (457 aa).

147–154 is a binding site for ATP; sequence GGAGVGKT.

Belongs to the ATPase alpha/beta chains family. In terms of assembly, F-type ATPases have 2 components, CF(1) - the catalytic core - and CF(0) - the membrane proton channel. CF(1) has five subunits: alpha(3), beta(3), gamma(1), delta(1), epsilon(1). CF(0) has three main subunits: a(1), b(2) and c(9-12). The alpha and beta chains form an alternating ring which encloses part of the gamma chain. CF(1) is attached to CF(0) by a central stalk formed by the gamma and epsilon chains, while a peripheral stalk is formed by the delta and b chains.

It localises to the cell inner membrane. The catalysed reaction is ATP + H2O + 4 H(+)(in) = ADP + phosphate + 5 H(+)(out). Functionally, produces ATP from ADP in the presence of a proton gradient across the membrane. The catalytic sites are hosted primarily by the beta subunits. The sequence is that of ATP synthase subunit beta from Haemophilus ducreyi (strain 35000HP / ATCC 700724).